Here is a 319-residue protein sequence, read N- to C-terminus: Plastid lipid-associated protein 2, chloroplastic (319 aa).

Residues 1–59 (MATVQFFNQFPCKTRVQSSANSKPLSKPPSSLVPMSALTRRPSFPPGEFAVSRSDFRVR) constitute a chloroplast transit peptide. A disordered region spans residues 17 to 39 (QSSANSKPLSKPPSSLVPMSALT). The segment covering 18–36 (SSANSKPLSKPPSSLVPMS) has biased composition (low complexity).

Belongs to the PAP/fibrillin family. Expressed almost exclusively in petals. Very weak expression in all other organs.

It is found in the plastid. Its subcellular location is the chloroplast. May stabilize the accumulated carotenoid structures. In Brassica campestris (Field mustard), this protein is Plastid lipid-associated protein 2, chloroplastic (PAP2).